Here is a 217-residue protein sequence, read N- to C-terminus: Serine acetyltransferase (217 aa).

The protein belongs to the transferase hexapeptide repeat family.

It localises to the cytoplasm. The catalysed reaction is L-serine + acetyl-CoA = O-acetyl-L-serine + CoA. It functions in the pathway amino-acid biosynthesis; L-cysteine biosynthesis; L-cysteine from L-serine: step 1/2. Its activity is regulated as follows. Inhibited by cysteine. Its function is as follows. Catalyzes the acetylation of serine by acetyl-CoA to produce O-acetylserine (OAS). In Bacillus pumilus (strain SAFR-032), this protein is Serine acetyltransferase.